The sequence spans 285 residues: ATP synthase gamma chain (285 aa).

This sequence belongs to the ATPase gamma chain family. F-type ATPases have 2 components, CF(1) - the catalytic core - and CF(0) - the membrane proton channel. CF(1) has five subunits: alpha(3), beta(3), gamma(1), delta(1), epsilon(1). CF(0) has three main subunits: a, b and c.

The protein resides in the cell membrane. Its function is as follows. Produces ATP from ADP in the presence of a proton gradient across the membrane. The gamma chain is believed to be important in regulating ATPase activity and the flow of protons through the CF(0) complex. The sequence is that of ATP synthase gamma chain from Clostridium novyi (strain NT).